We begin with the raw amino-acid sequence, 150 residues long: Small ribosomal subunit protein eS19 (150 aa).

Belongs to the eukaryotic ribosomal protein eS19 family. As to quaternary structure, part of the 30S ribosomal subunit.

In terms of biological role, may be involved in maturation of the 30S ribosomal subunit. This chain is Small ribosomal subunit protein eS19, found in Thermoplasma acidophilum (strain ATCC 25905 / DSM 1728 / JCM 9062 / NBRC 15155 / AMRC-C165).